An 80-amino-acid polypeptide reads, in one-letter code: UPF0180 protein BPUM_1317 (80 aa).

The protein belongs to the UPF0180 family.

This is UPF0180 protein BPUM_1317 from Bacillus pumilus (strain SAFR-032).